A 366-amino-acid polypeptide reads, in one-letter code: Ribosomal RNA large subunit methyltransferase M (366 aa).

S-adenosyl-L-methionine-binding positions include S188, 221-224, D240, D260, and D277; that span reads CPGG. The Proton acceptor role is filled by K306.

Belongs to the class I-like SAM-binding methyltransferase superfamily. RNA methyltransferase RlmE family. RlmM subfamily. As to quaternary structure, monomer.

It is found in the cytoplasm. The catalysed reaction is cytidine(2498) in 23S rRNA + S-adenosyl-L-methionine = 2'-O-methylcytidine(2498) in 23S rRNA + S-adenosyl-L-homocysteine + H(+). In terms of biological role, catalyzes the 2'-O-methylation at nucleotide C2498 in 23S rRNA. The polypeptide is Ribosomal RNA large subunit methyltransferase M (Pectobacterium atrosepticum (strain SCRI 1043 / ATCC BAA-672) (Erwinia carotovora subsp. atroseptica)).